A 540-amino-acid chain; its full sequence is Putative F-box/LRR-repeat protein At5g41840 (540 aa).

The region spanning 13–61 (GDRISGLPDALICHILSFLPTKEAASTTVLAKRWKPLLAFVPNLNFDDS) is the F-box domain. LRR repeat units follow at residues 80–105 (FMSF…HVKC), 137–165 (RNYC…KIQF), 189–214 (YFKI…VLAN), 217–242 (WADS…NFCR), 254–282 (YEDY…EYSD), 329–360 (ILYL…TIKT), and 361–386 (TPYV…VFEG).

The chain is Putative F-box/LRR-repeat protein At5g41840 from Arabidopsis thaliana (Mouse-ear cress).